A 164-amino-acid polypeptide reads, in one-letter code: MFSMVTEFMNYSQQTVRAARYIGQGFMITLSHASRLPVTIQYPYEKLITSERFRGRIHFEFDKCIACEVCVRVCPIDLPVVDWKLEKDIRKKRLLNYSIDFGICIFCGNCVEYCPTNCLSMTEEYELSTYDRHELNYNQIALGRLPMSIINDYTTRTILNLPMK.

2 consecutive 4Fe-4S ferredoxin-type domains span residues 55–84 (GRIH…VDWK) and 95–124 (LNYS…MTEE). Residues cysteine 64, cysteine 67, cysteine 70, cysteine 74, cysteine 104, cysteine 107, cysteine 110, and cysteine 114 each coordinate [4Fe-4S] cluster.

The protein belongs to the complex I 23 kDa subunit family. As to quaternary structure, NDH is composed of at least 16 different subunits, 5 of which are encoded in the nucleus. The cofactor is [4Fe-4S] cluster.

It localises to the plastid. The protein localises to the chloroplast thylakoid membrane. It carries out the reaction a plastoquinone + NADH + (n+1) H(+)(in) = a plastoquinol + NAD(+) + n H(+)(out). The enzyme catalyses a plastoquinone + NADPH + (n+1) H(+)(in) = a plastoquinol + NADP(+) + n H(+)(out). NDH shuttles electrons from NAD(P)H:plastoquinone, via FMN and iron-sulfur (Fe-S) centers, to quinones in the photosynthetic chain and possibly in a chloroplast respiratory chain. The immediate electron acceptor for the enzyme in this species is believed to be plastoquinone. Couples the redox reaction to proton translocation, and thus conserves the redox energy in a proton gradient. The sequence is that of NAD(P)H-quinone oxidoreductase subunit I, chloroplastic from Daucus carota (Wild carrot).